The primary structure comprises 40 residues: Antimicrobial peptide 2 (40 aa).

The Chitin-binding type-1 domain maps to 1-40 (AQCGAQGGGATCPGGLCCSQWGWCGSTPKYCGAGCQSNCR). Intrachain disulfides connect Cys3/Cys18, Cys12/Cys24, Cys17/Cys31, and Cys35/Cys39.

In terms of processing, not glycosylated.

In terms of biological role, antimicrobial peptide active against plant pathogenic fungi and Gram-negative and -positive bacteria. This Fagopyrum esculentum (Common buckwheat) protein is Antimicrobial peptide 2.